The sequence spans 278 residues: Sulfur carrier protein FdhD (278 aa).

Cysteine 120 acts as the Cysteine persulfide intermediate in catalysis.

This sequence belongs to the FdhD family.

It localises to the cytoplasm. Functionally, required for formate dehydrogenase (FDH) activity. Acts as a sulfur carrier protein that transfers sulfur from IscS to the molybdenum cofactor prior to its insertion into FDH. This is Sulfur carrier protein FdhD from Bordetella petrii (strain ATCC BAA-461 / DSM 12804 / CCUG 43448).